Reading from the N-terminus, the 141-residue chain is MEIRIFQQDDFEEVILLWEHCDLLRPWNDPEMDIERKLNHDPELFLVAEVNGTIVGSVMGGYDGHRGSAYYLGVHPDYRGRGFANALISRLEKKLIARGCPKLNIMVREDNDAVIGMYEKLDYETQDTIMLGKRLIVDQEY.

In terms of domain architecture, N-acetyltransferase spans 1-141 (MEIRIFQQDD…GKRLIVDQEY (141 aa)).

The protein belongs to the acetyltransferase family. YpeA subfamily.

The chain is Acetyltransferase YPN_1354 from Yersinia pestis bv. Antiqua (strain Nepal516).